A 67-amino-acid chain; its full sequence is Small ribosomal subunit protein eS31 (67 aa).

Zn(2+) contacts are provided by cysteine 31, cysteine 34, cysteine 49, and cysteine 52. The C4-type zinc finger occupies 31 to 52 (CPKCGAGVFMAEHLNRFACGKC).

It belongs to the eukaryotic ribosomal protein eS31 family. As to quaternary structure, part of the 30S ribosomal subunit. Zn(2+) is required as a cofactor.

This is Small ribosomal subunit protein eS31 from Methanococcus maripaludis (strain C5 / ATCC BAA-1333).